We begin with the raw amino-acid sequence, 26 residues long: Aldehyde dehydrogenase beta chain (26 aa).

In terms of assembly, heterotrimer composed of an alpha, a beta and a gamma chain. FAD serves as cofactor.

It catalyses the reaction an aldehyde + a quinone + H2O = a quinol + a carboxylate + H(+). The polypeptide is Aldehyde dehydrogenase beta chain (Amycolatopsis methanolica).